Here is a 601-residue protein sequence, read N- to C-terminus: Protein NRT1/ PTR FAMILY 4.4 (601 aa).

2 consecutive transmembrane segments (helical) span residues 44-64 (AALFVLGFQAFEMMAIAAVGN) and 82-102 (ANLVTNFIGTVFLLSLLGGFL). Thr-112 bears the Phosphothreonine mark. Helical transmembrane passes span 113–133 (MLVFGVIEISGFILLSVQAHL), 160–180 (TLYTALCLVALGSGCLKPNII), 198–218 (FFNAAYFAFSMGQLIALTLLV), 228–248 (VGFGVSAAVMAAGMISLVAGT), 337–357 (ILLSVIPIFACTIIFNTILAQ), 386–406 (AIPYIILIFFVPLYETFFVPL), 420–440 (LQRIGTGLFLATFSMVAAALV), 453–473 (VMLSIFWIAPQFLIFGLSEMF), 493–513 (FLTAMTYCSYSFGFYLSSVLV), and 544–564 (HFYWLLASLSFINFFNYLFWS).

This sequence belongs to the major facilitator superfamily. Proton-dependent oligopeptide transporter (POT/PTR) (TC 2.A.17) family. In terms of tissue distribution, expressed in shoots, roots and stems.

The protein resides in the membrane. The sequence is that of Protein NRT1/ PTR FAMILY 4.4 (NPF4.4) from Arabidopsis thaliana (Mouse-ear cress).